The sequence spans 178 residues: Nicotinamide-nucleotide adenylyltransferase (178 aa).

The protein belongs to the archaeal NMN adenylyltransferase family.

It localises to the cytoplasm. The enzyme catalyses beta-nicotinamide D-ribonucleotide + ATP + H(+) = diphosphate + NAD(+). It functions in the pathway cofactor biosynthesis; NAD(+) biosynthesis; NAD(+) from nicotinamide D-ribonucleotide: step 1/1. The protein is Nicotinamide-nucleotide adenylyltransferase of Pyrobaculum neutrophilum (strain DSM 2338 / JCM 9278 / NBRC 100436 / V24Sta) (Thermoproteus neutrophilus).